An 864-amino-acid chain; its full sequence is Alanine--tRNA ligase (864 aa).

Residues His-553, His-557, Cys-655, and His-659 each contribute to the Zn(2+) site. The tract at residues 828–847 (VGGKGGGRPDMAQAGGKDPS) is disordered.

This sequence belongs to the class-II aminoacyl-tRNA synthetase family. Requires Zn(2+) as cofactor.

It is found in the cytoplasm. It carries out the reaction tRNA(Ala) + L-alanine + ATP = L-alanyl-tRNA(Ala) + AMP + diphosphate. Its function is as follows. Catalyzes the attachment of alanine to tRNA(Ala) in a two-step reaction: alanine is first activated by ATP to form Ala-AMP and then transferred to the acceptor end of tRNA(Ala). Also edits incorrectly charged Ser-tRNA(Ala) and Gly-tRNA(Ala) via its editing domain. The chain is Alanine--tRNA ligase from Hydrogenovibrio crunogenus (strain DSM 25203 / XCL-2) (Thiomicrospira crunogena).